The following is a 293-amino-acid chain: Ribosomal protein L11 methyltransferase (293 aa).

S-adenosyl-L-methionine is bound by residues T145, G166, D188, and N230.

Belongs to the methyltransferase superfamily. PrmA family.

It localises to the cytoplasm. It catalyses the reaction L-lysyl-[protein] + 3 S-adenosyl-L-methionine = N(6),N(6),N(6)-trimethyl-L-lysyl-[protein] + 3 S-adenosyl-L-homocysteine + 3 H(+). Functionally, methylates ribosomal protein L11. This chain is Ribosomal protein L11 methyltransferase, found in Yersinia pseudotuberculosis serotype I (strain IP32953).